The following is a 126-amino-acid chain: Aspartate 1-decarboxylase (126 aa).

S25 acts as the Schiff-base intermediate with substrate; via pyruvic acid in catalysis. A Pyruvic acid (Ser) modification is found at S25. Residue T57 participates in substrate binding. Residue Y58 is the Proton donor of the active site. 73–75 (GAA) contacts substrate.

Belongs to the PanD family. In terms of assembly, heterooctamer of four alpha and four beta subunits. The cofactor is pyruvate. Post-translationally, is synthesized initially as an inactive proenzyme, which is activated by self-cleavage at a specific serine bond to produce a beta-subunit with a hydroxyl group at its C-terminus and an alpha-subunit with a pyruvoyl group at its N-terminus.

Its subcellular location is the cytoplasm. The catalysed reaction is L-aspartate + H(+) = beta-alanine + CO2. The protein operates within cofactor biosynthesis; (R)-pantothenate biosynthesis; beta-alanine from L-aspartate: step 1/1. Its function is as follows. Catalyzes the pyruvoyl-dependent decarboxylation of aspartate to produce beta-alanine. The sequence is that of Aspartate 1-decarboxylase from Psychrobacter sp. (strain PRwf-1).